The sequence spans 244 residues: Coenzyme Q-binding protein COQ10 homolog B, mitochondrial (244 aa).

The protein belongs to the COQ10 family. In terms of assembly, interacts with coenzyme Q.

It is found in the mitochondrion inner membrane. Functionally, required for the function of coenzyme Q in the respiratory chain. May serve as a chaperone or may be involved in the transport of Q6 from its site of synthesis to the catalytic sites of the respiratory complexes. The chain is Coenzyme Q-binding protein COQ10 homolog B, mitochondrial (coq10b) from Xenopus laevis (African clawed frog).